The following is a 389-amino-acid chain: Chalcone synthase E (389 aa).

Residue Cys164 is part of the active site.

The protein belongs to the thiolase-like superfamily. Chalcone/stilbene synthases family.

The enzyme catalyses (E)-4-coumaroyl-CoA + 3 malonyl-CoA + 3 H(+) = 2',4,4',6'-tetrahydroxychalcone + 3 CO2 + 4 CoA. Its pathway is secondary metabolite biosynthesis; flavonoid biosynthesis. Its function is as follows. The primary product of this enzyme is 4,2',4',6'-tetrahydroxychalcone (also termed naringenin-chalcone or chalcone) which can under specific conditions spontaneously isomerize into naringenin. This is Chalcone synthase E (CHSE) from Ipomoea purpurea (Common morning glory).